Reading from the N-terminus, the 297-residue chain is Glycerol-3-phosphate dehydrogenase [NAD(P)+] (297 aa).

Positions 11, 33, and 79 each coordinate NADPH. Sn-glycerol 3-phosphate is bound by residues Lys-79, Gly-107, and Ser-109. Ala-111 contacts NADPH. Residues Lys-161, Asp-214, Ser-224, Arg-225, and Asn-226 each contribute to the sn-glycerol 3-phosphate site. Lys-161 acts as the Proton acceptor in catalysis. Arg-225 contacts NADPH. Residues Val-249 and Glu-251 each contribute to the NADPH site.

This sequence belongs to the NAD-dependent glycerol-3-phosphate dehydrogenase family.

The protein resides in the cytoplasm. It carries out the reaction sn-glycerol 3-phosphate + NAD(+) = dihydroxyacetone phosphate + NADH + H(+). It catalyses the reaction sn-glycerol 3-phosphate + NADP(+) = dihydroxyacetone phosphate + NADPH + H(+). It participates in membrane lipid metabolism; glycerophospholipid metabolism. In terms of biological role, catalyzes the reduction of the glycolytic intermediate dihydroxyacetone phosphate (DHAP) to sn-glycerol 3-phosphate (G3P), the key precursor for phospholipid synthesis. The polypeptide is Glycerol-3-phosphate dehydrogenase [NAD(P)+] (Campylobacter jejuni subsp. jejuni serotype O:23/36 (strain 81-176)).